A 515-amino-acid polypeptide reads, in one-letter code: Integrator complex subunit 14 (515 aa).

The 203-residue stretch at 2-204 (PTVVVMDVSL…KNVQSMFGKL (203 aa)) folds into the VWFA domain. Mg(2+) contacts are provided by S10, S12, and T86. An N6-acetyllysine modification is found at K418.

It belongs to the Integrator subunit 14 family. As to quaternary structure, component of the Integrator complex, composed of core subunits INTS1, INTS2, INTS3, INTS4, INTS5, INTS6, INTS7, INTS8, INTS9/RC74, INTS10, INTS11/CPSF3L, INTS12, INTS13, INTS14 and INTS15. The core complex associates with protein phosphatase 2A subunits PPP2CA and PPP2R1A, to form the Integrator-PP2A (INTAC) complex. INTS14 is part of the tail subcomplex, composed of INTS10, INTS13, INTS14 and INTS15.

It localises to the nucleus. Its function is as follows. Component of the integrator complex, a multiprotein complex that terminates RNA polymerase II (Pol II) transcription in the promoter-proximal region of genes. The integrator complex provides a quality checkpoint during transcription elongation by driving premature transcription termination of transcripts that are unfavorably configured for transcriptional elongation: the complex terminates transcription by (1) catalyzing dephosphorylation of the C-terminal domain (CTD) of Pol II subunit POLR2A/RPB1 and SUPT5H/SPT5, (2) degrading the exiting nascent RNA transcript via endonuclease activity and (3) promoting the release of Pol II from bound DNA. The integrator complex is also involved in terminating the synthesis of non-coding Pol II transcripts, such as enhancer RNAs (eRNAs), small nuclear RNAs (snRNAs), telomerase RNAs and long non-coding RNAs (lncRNAs). Within the integrator complex, INTS14 is part of the integrator tail module that acts as a platform for the recruitment of transcription factors at promoters. The sequence is that of Integrator complex subunit 14 from Mus musculus (Mouse).